A 339-amino-acid chain; its full sequence is D-alanine--D-alanine ligase (339 aa).

An ATP-grasp domain is found at 126–333; sequence KQVLASVGMP…YSELVTRLVE (208 aa). 158-213 lines the ATP pocket; sequence AGELGYPLFVKPANLGSSVGISKVSGPGELERALDLAFSLGRRVILEAMTAHKPRE. Residues Asp286, Glu300, and Asn302 each coordinate Mg(2+).

Belongs to the D-alanine--D-alanine ligase family. The cofactor is Mg(2+). Mn(2+) is required as a cofactor.

It localises to the cytoplasm. It carries out the reaction 2 D-alanine + ATP = D-alanyl-D-alanine + ADP + phosphate + H(+). It participates in cell wall biogenesis; peptidoglycan biosynthesis. Functionally, cell wall formation. This Deinococcus geothermalis (strain DSM 11300 / CIP 105573 / AG-3a) protein is D-alanine--D-alanine ligase.